A 509-amino-acid polypeptide reads, in one-letter code: Maturase K (509 aa).

This sequence belongs to the intron maturase 2 family. MatK subfamily.

The protein localises to the plastid. The protein resides in the chloroplast. In terms of biological role, usually encoded in the trnK tRNA gene intron. Probably assists in splicing its own and other chloroplast group II introns. The chain is Maturase K from Opuntia quimilo (Cactus).